Reading from the N-terminus, the 121-residue chain is Large ribosomal subunit protein uL14c (121 aa).

The protein belongs to the universal ribosomal protein uL14 family. In terms of assembly, part of the 50S ribosomal subunit.

It is found in the plastid. The protein localises to the chloroplast. Binds to 23S rRNA. In Tetradesmus obliquus (Green alga), this protein is Large ribosomal subunit protein uL14c.